Reading from the N-terminus, the 316-residue chain is tRNA pseudouridine synthase B (316 aa).

The active-site Nucleophile is the aspartate 47.

It belongs to the pseudouridine synthase TruB family. Type 1 subfamily.

The catalysed reaction is uridine(55) in tRNA = pseudouridine(55) in tRNA. Functionally, responsible for synthesis of pseudouridine from uracil-55 in the psi GC loop of transfer RNAs. This chain is tRNA pseudouridine synthase B, found in Aliivibrio fischeri (strain MJ11) (Vibrio fischeri).